The following is a 38-amino-acid chain: GVDKPGCRYMFGGCVQDDDCCPHLGCKRKGLYCAWDAS.

Cystine bridges form between Cys7–Cys21, Cys14–Cys26, and Cys20–Cys33. At Ser38 the chain carries Serine amide.

Belongs to the neurotoxin 10 (Hwtx-1) family. 28 (Jztx-11) subfamily. In terms of tissue distribution, expressed by the venom gland.

It localises to the secreted. Paralytic toxin on insects that inhibits voltage-gated sodium (Nav) and calcium (Cav) channels in P.americana (American cockroach) dorsal unpaired median (DUM) neurons, and also inhibits the B.germanica (German cockroach) Nav channel (BgNaV1). May act as a gating-modifier toxin on Nav and as a pore blocker on Cav. In vivo, reversibly paralyzes both L.cuprina (Australian sheep blowfly) and M.domestica (housefly), but does not affect larvae of H.armigera (cotton bollworms). In Monocentropus balfouri (Socotra Island blue baboon tarantula), this protein is Mu/omega-theraphotoxin-Mb1b.